The primary structure comprises 124 residues: Small ribosomal subunit protein uS12 (124 aa).

The segment at 1 to 28 (MPTIQQLIRTERQSSKAKTKSPALKSCP) is disordered. Asp-89 is subject to 3-methylthioaspartic acid. A disordered region spans residues 104–124 (TAGVKDRRQSRSKYGAKTPKE).

The protein belongs to the universal ribosomal protein uS12 family. As to quaternary structure, part of the 30S ribosomal subunit. Contacts proteins S8 and S17. May interact with IF1 in the 30S initiation complex.

Functionally, with S4 and S5 plays an important role in translational accuracy. Interacts with and stabilizes bases of the 16S rRNA that are involved in tRNA selection in the A site and with the mRNA backbone. Located at the interface of the 30S and 50S subunits, it traverses the body of the 30S subunit contacting proteins on the other side and probably holding the rRNA structure together. The combined cluster of proteins S8, S12 and S17 appears to hold together the shoulder and platform of the 30S subunit. This Synechococcus sp. (strain WH7803) protein is Small ribosomal subunit protein uS12.